We begin with the raw amino-acid sequence, 282 residues long: Bifunctional protein FolD (282 aa).

Residues 164 to 166 and S189 contribute to the NADP(+) site; that span reads GRS.

This sequence belongs to the tetrahydrofolate dehydrogenase/cyclohydrolase family. As to quaternary structure, homodimer.

It catalyses the reaction (6R)-5,10-methylene-5,6,7,8-tetrahydrofolate + NADP(+) = (6R)-5,10-methenyltetrahydrofolate + NADPH. The enzyme catalyses (6R)-5,10-methenyltetrahydrofolate + H2O = (6R)-10-formyltetrahydrofolate + H(+). It functions in the pathway one-carbon metabolism; tetrahydrofolate interconversion. In terms of biological role, catalyzes the oxidation of 5,10-methylenetetrahydrofolate to 5,10-methenyltetrahydrofolate and then the hydrolysis of 5,10-methenyltetrahydrofolate to 10-formyltetrahydrofolate. The sequence is that of Bifunctional protein FolD from Streptococcus suis (strain 05ZYH33).